The sequence spans 337 residues: Heme A synthase (337 aa).

7 consecutive transmembrane segments (helical) span residues 3–23, 94–114, 120–140, 154–174, 191–211, 248–268, and 289–309; these read LARW…IGGI, VIGL…MIPA, LLAL…MVAS, LSAH…TALD, GVAW…AWVA, FLLH…LVVL, and TMVV…IAVA. Heme is bound at residue His254. His310 contacts heme. Residues 311 to 331 traverse the membrane as a helical segment; the sequence is QLTGALLVISTAWAAHAIGTA.

It belongs to the COX15/CtaA family. Type 2 subfamily. As to quaternary structure, interacts with CtaB. Heme b serves as cofactor.

It is found in the cell membrane. It carries out the reaction Fe(II)-heme o + 2 A + H2O = Fe(II)-heme a + 2 AH2. The protein operates within porphyrin-containing compound metabolism; heme A biosynthesis; heme A from heme O: step 1/1. Its function is as follows. Catalyzes the conversion of heme O to heme A by two successive hydroxylations of the methyl group at C8. The first hydroxylation forms heme I, the second hydroxylation results in an unstable dihydroxymethyl group, which spontaneously dehydrates, resulting in the formyl group of heme A. This Erythrobacter litoralis (strain HTCC2594) protein is Heme A synthase.